The chain runs to 400 residues: Apolipoprotein N-acyltransferase (400 aa).

5 helical membrane passes run 16–36 (AISPLLVSLLGLFSIASVLFV), 42–62 (FGVGFFIGMLWFYWISLGLRY), 67–87 (FLIPLVVIACGIFMGFVFYIG), 97–117 (FAFLLLLSYLTPFGFDWIVPE), and 123–143 (SYIGVDKLSFALSILALWILF). Positions 181–400 (AQSAVSQDFD…AIITPFVSSR (220 aa)) constitute a CN hydrolase domain. E222 (proton acceptor) is an active-site residue. K283 is a catalytic residue. C332 functions as the Nucleophile in the catalytic mechanism. Residues 377-397 (YGSVIFHATNLSPAAIITPFV) traverse the membrane as a helical segment.

It belongs to the CN hydrolase family. Apolipoprotein N-acyltransferase subfamily.

Its subcellular location is the cell inner membrane. The enzyme catalyses N-terminal S-1,2-diacyl-sn-glyceryl-L-cysteinyl-[lipoprotein] + a glycerophospholipid = N-acyl-S-1,2-diacyl-sn-glyceryl-L-cysteinyl-[lipoprotein] + a 2-acyl-sn-glycero-3-phospholipid + H(+). It participates in protein modification; lipoprotein biosynthesis (N-acyl transfer). In terms of biological role, catalyzes the phospholipid dependent N-acylation of the N-terminal cysteine of apolipoprotein, the last step in lipoprotein maturation. This is Apolipoprotein N-acyltransferase from Helicobacter hepaticus (strain ATCC 51449 / 3B1).